The sequence spans 1108 residues: AP-3 complex subunit beta (1108 aa).

HEAT repeat units lie at residues 90 to 127 (DSAL…IDII), 327 to 363 (IEAQ…LRPS), 397 to 433 (ENIG…STVP), and 434 to 471 (DVTE…LNAT). Over residues 480–490 (KEKEKEKDVKE) the composition is skewed to basic and acidic residues. Disordered regions lie at residues 480–501 (KEKE…HSSS), 736–797 (DEEE…YDGE), and 811–835 (LFGI…GEEE). Acidic residues-rich tracts occupy residues 736–764 (DEEE…EDFF) and 780–797 (YDED…YDGE).

This sequence belongs to the adaptor complexes large subunit family. Adaptor protein complex 3 (AP-3) is a heterotetramer composed of two large adaptins (delta-type subunit and beta-type subunit), a medium adaptin (mu-type subunit) and a small adaptin (sigma-type subunit).

It localises to the endosome membrane. In terms of biological role, part of the AP-3 complex, an adaptor-related complex which is essential for the compartmentalization of the endocytic pathway. The sequence is that of AP-3 complex subunit beta (ap3b-1) from Dictyostelium discoideum (Social amoeba).